Here is a 56-residue protein sequence, read N- to C-terminus: Large ribosomal subunit protein bL32 (56 aa).

Positions M1 to R16 are enriched in basic residues. A disordered region spans residues M1 to A21.

This sequence belongs to the bacterial ribosomal protein bL32 family.

The protein is Large ribosomal subunit protein bL32 of Vibrio atlanticus (strain LGP32) (Vibrio splendidus (strain Mel32)).